Here is a 322-residue protein sequence, read N- to C-terminus: HPr kinase/phosphorylase (322 aa).

Active-site residues include His146 and Lys167. Residue Gly161–Ser168 coordinates ATP. Ser168 provides a ligand contact to Mg(2+). Catalysis depends on Asp185, which acts as the Proton acceptor; for phosphorylation activity. Proton donor; for dephosphorylation activity. The important for the catalytic mechanism of both phosphorylation and dephosphorylation stretch occupies residues Leu209–Asp218. Mg(2+) is bound at residue Glu210. Arg250 is an active-site residue. The tract at residues Gln271–Arg276 is important for the catalytic mechanism of dephosphorylation.

This sequence belongs to the HPrK/P family. In terms of assembly, homohexamer. It depends on Mg(2+) as a cofactor.

It catalyses the reaction [HPr protein]-L-serine + ATP = [HPr protein]-O-phospho-L-serine + ADP + H(+). It carries out the reaction [HPr protein]-O-phospho-L-serine + phosphate + H(+) = [HPr protein]-L-serine + diphosphate. Catalyzes the ATP- as well as the pyrophosphate-dependent phosphorylation of a specific serine residue in HPr, a phosphocarrier protein of the phosphoenolpyruvate-dependent sugar phosphotransferase system (PTS). HprK/P also catalyzes the pyrophosphate-producing, inorganic phosphate-dependent dephosphorylation (phosphorolysis) of seryl-phosphorylated HPr (P-Ser-HPr). The protein is HPr kinase/phosphorylase of Burkholderia multivorans (strain ATCC 17616 / 249).